The following is a 204-amino-acid chain: FMN-dependent NADH:quinone oxidoreductase (204 aa).

FMN-binding positions include Ser-9, 15-17, and 97-100; these read SVS and MYNF.

This sequence belongs to the azoreductase type 1 family. Homodimer. It depends on FMN as a cofactor.

It catalyses the reaction 2 a quinone + NADH + H(+) = 2 a 1,4-benzosemiquinone + NAD(+). The catalysed reaction is N,N-dimethyl-1,4-phenylenediamine + anthranilate + 2 NAD(+) = 2-(4-dimethylaminophenyl)diazenylbenzoate + 2 NADH + 2 H(+). In terms of biological role, quinone reductase that provides resistance to thiol-specific stress caused by electrophilic quinones. Functionally, also exhibits azoreductase activity. Catalyzes the reductive cleavage of the azo bond in aromatic azo compounds to the corresponding amines. The chain is FMN-dependent NADH:quinone oxidoreductase from Methylobacterium radiotolerans (strain ATCC 27329 / DSM 1819 / JCM 2831 / NBRC 15690 / NCIMB 10815 / 0-1).